The chain runs to 310 residues: tRNA-cytidine(32) 2-sulfurtransferase (310 aa).

A PP-loop motif motif is present at residues 45–50; sequence SGGKDS. Positions 120, 123, and 211 each coordinate [4Fe-4S] cluster.

The protein belongs to the TtcA family. As to quaternary structure, homodimer. Mg(2+) serves as cofactor. It depends on [4Fe-4S] cluster as a cofactor.

The protein resides in the cytoplasm. The enzyme catalyses cytidine(32) in tRNA + S-sulfanyl-L-cysteinyl-[cysteine desulfurase] + AH2 + ATP = 2-thiocytidine(32) in tRNA + L-cysteinyl-[cysteine desulfurase] + A + AMP + diphosphate + H(+). It functions in the pathway tRNA modification. Catalyzes the ATP-dependent 2-thiolation of cytidine in position 32 of tRNA, to form 2-thiocytidine (s(2)C32). The sulfur atoms are provided by the cysteine/cysteine desulfurase (IscS) system. This chain is tRNA-cytidine(32) 2-sulfurtransferase, found in Shewanella putrefaciens (strain CN-32 / ATCC BAA-453).